The following is a 236-amino-acid chain: Ribosome assembly factor mrt4 (236 aa).

The protein belongs to the universal ribosomal protein uL10 family. In terms of assembly, associates with the pre-60S ribosomal particle.

Its subcellular location is the nucleus. The protein localises to the nucleolus. The protein resides in the cytoplasm. Functionally, component of the ribosome assembly machinery. Nuclear paralog of the ribosomal protein P0, it binds pre-60S subunits at an early stage of assembly in the nucleolus, and is replaced by P0 in cytoplasmic pre-60S subunits and mature 80S ribosomes. The protein is Ribosome assembly factor mrt4 of Eremothecium gossypii (strain ATCC 10895 / CBS 109.51 / FGSC 9923 / NRRL Y-1056) (Yeast).